The primary structure comprises 153 residues: Hemoglobin-3 (153 aa).

An N-acetylserine modification is found at Ser-2. The 147-residue stretch at 4 to 150 folds into the Globin domain; that stretch reads GLTGPQKAAL…ICRVQGDFMK (147 aa). Position 99 (His-99) interacts with heme b.

This sequence belongs to the globin family. As to quaternary structure, homotetramer.

The protein resides in the cytoplasm. This chain is Hemoglobin-3, found in Phacoides pectinatus (Thick lucine).